Reading from the N-terminus, the 168-residue chain is SPbeta prophage-derived uncharacterized protein YonX (168 aa).

Residues 1–53 adopt a coiled-coil conformation; the sequence is MNAQLFNLESRLDELENEINTQYCELDTNLDALKSNRIELESQLEKFESSLTN.

This Bacillus subtilis (strain 168) protein is SPbeta prophage-derived uncharacterized protein YonX (yonX).